Here is a 168-residue protein sequence, read N- to C-terminus: Mediator of RNA polymerase II transcription subunit 11 (168 aa).

Positions Glu-126–Glu-168 are disordered. The span at Asn-130–Ile-156 shows a compositional bias: polar residues. A compositionally biased stretch (basic and acidic residues) spans Asn-157–Glu-168.

The protein belongs to the Mediator complex subunit 11 family. Component of the Mediator complex.

The protein resides in the nucleus. Its function is as follows. Component of the Mediator complex, a coactivator involved in the regulated transcription of nearly all RNA polymerase II-dependent genes. Mediator functions as a bridge to convey information from gene-specific regulatory proteins to the basal RNA polymerase II transcription machinery. Mediator is recruited to promoters by direct interactions with regulatory proteins and serves as a scaffold for the assembly of a functional pre-initiation complex with RNA polymerase II and the general transcription factors. The protein is Mediator of RNA polymerase II transcription subunit 11 (MED11) of Candida albicans (strain SC5314 / ATCC MYA-2876) (Yeast).